A 346-amino-acid polypeptide reads, in one-letter code: Protein-glutamate methylesterase/protein-glutamine glutaminase (346 aa).

The Response regulatory domain maps to 6–123 (KVLVVDDSAF…SLDLEKVRDL (118 aa)). Residue Asp57 is modified to 4-aspartylphosphate. Residues 155–346 (PFDKTIIVIG…ADSIVRQCKR (192 aa)) enclose the CheB-type methylesterase domain. Residues Ser166, His193, and Asp289 contribute to the active site.

The protein belongs to the CheB family. Phosphorylated by CheA. Phosphorylation of the N-terminal regulatory domain activates the methylesterase activity.

The protein resides in the cytoplasm. The catalysed reaction is [protein]-L-glutamate 5-O-methyl ester + H2O = L-glutamyl-[protein] + methanol + H(+). The enzyme catalyses L-glutaminyl-[protein] + H2O = L-glutamyl-[protein] + NH4(+). Involved in chemotaxis. Part of a chemotaxis signal transduction system that modulates chemotaxis in response to various stimuli. Catalyzes the demethylation of specific methylglutamate residues introduced into the chemoreceptors (methyl-accepting chemotaxis proteins or MCP) by CheR. Also mediates the irreversible deamidation of specific glutamine residues to glutamic acid. The sequence is that of Protein-glutamate methylesterase/protein-glutamine glutaminase from Halalkalibacterium halodurans (strain ATCC BAA-125 / DSM 18197 / FERM 7344 / JCM 9153 / C-125) (Bacillus halodurans).